The sequence spans 413 residues: Arginine biosynthesis bifunctional protein ArgJ (413 aa).

Substrate contacts are provided by T163, K189, T200, E286, N408, and T413. The active-site Nucleophile is T200.

The protein belongs to the ArgJ family. In terms of assembly, heterotetramer of two alpha and two beta chains.

Its subcellular location is the cytoplasm. The enzyme catalyses N(2)-acetyl-L-ornithine + L-glutamate = N-acetyl-L-glutamate + L-ornithine. The catalysed reaction is L-glutamate + acetyl-CoA = N-acetyl-L-glutamate + CoA + H(+). Its pathway is amino-acid biosynthesis; L-arginine biosynthesis; L-ornithine and N-acetyl-L-glutamate from L-glutamate and N(2)-acetyl-L-ornithine (cyclic): step 1/1. It participates in amino-acid biosynthesis; L-arginine biosynthesis; N(2)-acetyl-L-ornithine from L-glutamate: step 1/4. Its function is as follows. Catalyzes two activities which are involved in the cyclic version of arginine biosynthesis: the synthesis of N-acetylglutamate from glutamate and acetyl-CoA as the acetyl donor, and of ornithine by transacetylation between N(2)-acetylornithine and glutamate. The protein is Arginine biosynthesis bifunctional protein ArgJ of Staphylococcus aureus (strain COL).